A 117-amino-acid chain; its full sequence is Large ribosomal subunit protein uL18 (117 aa).

This sequence belongs to the universal ribosomal protein uL18 family. In terms of assembly, part of the 50S ribosomal subunit; part of the 5S rRNA/L5/L18/L25 subcomplex. Contacts the 5S and 23S rRNAs.

Its function is as follows. This is one of the proteins that bind and probably mediate the attachment of the 5S RNA into the large ribosomal subunit, where it forms part of the central protuberance. The sequence is that of Large ribosomal subunit protein uL18 from Yersinia enterocolitica serotype O:8 / biotype 1B (strain NCTC 13174 / 8081).